The following is a 128-amino-acid chain: Cionin (128 aa).

The first 22 residues, 1-22 (MGSNIVIYFSIIVIVTLNVNGV), serve as a signal peptide directing secretion. The propeptide occupies 23-108 (PASDLFKSVS…NQGHMQRMDR (86 aa)). Sulfotyrosine occurs at positions 110 and 111. Phe-116 is subject to Phenylalanine amide. The propeptide occupies 120–128 (AIEDVDYEY).

It belongs to the gastrin/cholecystokinin family. In terms of tissue distribution, expressed in both the gut and the neural ganglion.

The protein localises to the secreted. This chain is Cionin, found in Ciona intestinalis (Transparent sea squirt).